The following is a 374-amino-acid chain: Protein RecA (374 aa).

66 to 73 contributes to the ATP binding site; it reads GPESSGKT. The interval 327 to 374 is disordered; that stretch reads LGVGVHPEESATEPGADAASAAPADAAPAVPAPTTAKATKSKAAAAKS. Residues 338–374 show a composition bias toward low complexity; it reads TEPGADAASAAPADAAPAVPAPTTAKATKSKAAAAKS.

The protein belongs to the RecA family.

The protein resides in the cytoplasm. Functionally, can catalyze the hydrolysis of ATP in the presence of single-stranded DNA, the ATP-dependent uptake of single-stranded DNA by duplex DNA, and the ATP-dependent hybridization of homologous single-stranded DNAs. It interacts with LexA causing its activation and leading to its autocatalytic cleavage. The protein is Protein RecA of Streptomyces lividans.